Consider the following 469-residue polypeptide: Ubiquitin carboxyl-terminal hydrolase MINDY-1 (469 aa).

A disordered region spans residues Met1–Leu85. Basic and acidic residues predominate over residues His34–Ala53. Ser103 carries the post-translational modification Phosphoserine. Cys137 (nucleophile) is an active-site residue. The active-site Proton acceptor is His319. Residues Gln388–Gln426 are ubiquitin-binding domain (UBD). The interval Gln428–Leu469 is disordered. Ser441 is modified (phosphoserine). Residues Ala453–Leu469 show a composition bias toward basic and acidic residues.

Belongs to the MINDY deubiquitinase family. FAM63 subfamily.

It carries out the reaction Thiol-dependent hydrolysis of ester, thioester, amide, peptide and isopeptide bonds formed by the C-terminal Gly of ubiquitin (a 76-residue protein attached to proteins as an intracellular targeting signal).. In terms of biological role, hydrolase that can specifically remove 'Lys-48'-linked conjugated ubiquitin from proteins. Has exodeubiquitinase activity and has a preference for long polyubiquitin chains. May play a regulatory role at the level of protein turnover. The protein is Ubiquitin carboxyl-terminal hydrolase MINDY-1 (MINDY1) of Pongo abelii (Sumatran orangutan).